Reading from the N-terminus, the 1546-residue chain is DNA-directed RNA polymerase subunit beta' (1546 aa).

Residues Cys-57, Cys-59, Cys-72, and Cys-75 each contribute to the Zn(2+) site. Mg(2+) contacts are provided by Asp-756, Asp-758, and Asp-760. Zn(2+) is bound by residues Cys-1130, Cys-1211, Cys-1218, and Cys-1221. A disordered region spans residues 1512–1546 (LEKYGEGSTSSDAVTGGQRYDDTRPGSSINPGYGD). Over residues 1536 to 1546 (PGSSINPGYGD) the composition is skewed to polar residues.

It belongs to the RNA polymerase beta' chain family. The RNAP catalytic core consists of 2 alpha, 1 beta, 1 beta' and 1 omega subunit. When a sigma factor is associated with the core the holoenzyme is formed, which can initiate transcription. Mg(2+) is required as a cofactor. Requires Zn(2+) as cofactor.

The catalysed reaction is RNA(n) + a ribonucleoside 5'-triphosphate = RNA(n+1) + diphosphate. Its function is as follows. DNA-dependent RNA polymerase catalyzes the transcription of DNA into RNA using the four ribonucleoside triphosphates as substrates. The sequence is that of DNA-directed RNA polymerase subunit beta' from Deinococcus radiodurans (strain ATCC 13939 / DSM 20539 / JCM 16871 / CCUG 27074 / LMG 4051 / NBRC 15346 / NCIMB 9279 / VKM B-1422 / R1).